The sequence spans 98 residues: NADH-ubiquinone oxidoreductase chain 4L (98 aa).

Transmembrane regions (helical) follow at residues 1–21 (MSLI…GLLM), 29–49 (ALLC…LTIL), and 61–81 (IILL…LVMV).

It belongs to the complex I subunit 4L family. As to quaternary structure, core subunit of respiratory chain NADH dehydrogenase (Complex I) which is composed of 45 different subunits.

It is found in the mitochondrion inner membrane. It catalyses the reaction a ubiquinone + NADH + 5 H(+)(in) = a ubiquinol + NAD(+) + 4 H(+)(out). In terms of biological role, core subunit of the mitochondrial membrane respiratory chain NADH dehydrogenase (Complex I) which catalyzes electron transfer from NADH through the respiratory chain, using ubiquinone as an electron acceptor. Part of the enzyme membrane arm which is embedded in the lipid bilayer and involved in proton translocation. This chain is NADH-ubiquinone oxidoreductase chain 4L (MT-ND4L), found in Phocoena phocoena (Harbor porpoise).